A 56-amino-acid chain; its full sequence is Large ribosomal subunit protein bL33 (56 aa).

It belongs to the bacterial ribosomal protein bL33 family.

In Glaesserella parasuis serovar 5 (strain SH0165) (Haemophilus parasuis), this protein is Large ribosomal subunit protein bL33.